The chain runs to 337 residues: tRNA N6-adenosine threonylcarbamoyltransferase (337 aa).

Residues H111 and H115 each coordinate Fe cation. Substrate is bound by residues 134 to 138, D167, G180, and N272; that span reads LVSGG. D300 provides a ligand contact to Fe cation.

Belongs to the KAE1 / TsaD family. It depends on Fe(2+) as a cofactor.

It localises to the cytoplasm. The enzyme catalyses L-threonylcarbamoyladenylate + adenosine(37) in tRNA = N(6)-L-threonylcarbamoyladenosine(37) in tRNA + AMP + H(+). In terms of biological role, required for the formation of a threonylcarbamoyl group on adenosine at position 37 (t(6)A37) in tRNAs that read codons beginning with adenine. Is involved in the transfer of the threonylcarbamoyl moiety of threonylcarbamoyl-AMP (TC-AMP) to the N6 group of A37, together with TsaE and TsaB. TsaD likely plays a direct catalytic role in this reaction. This is tRNA N6-adenosine threonylcarbamoyltransferase from Escherichia coli (strain SMS-3-5 / SECEC).